A 315-amino-acid chain; its full sequence is Prephenate dehydratase (315 aa).

One can recognise a Prephenate dehydratase domain in the interval 3–190; sequence RIAYLGPQGT…ARTRFVLVGR (188 aa). The region spanning 204–281 is the ACT domain; sequence SVALRLPNTP…EDVRYLGSWP (78 aa).

Homodimer.

It carries out the reaction prephenate + H(+) = 3-phenylpyruvate + CO2 + H2O. The protein operates within amino-acid biosynthesis; L-phenylalanine biosynthesis; phenylpyruvate from prephenate: step 1/1. The polypeptide is Prephenate dehydratase (pheA) (Mycobacterium sp. (strain JLS)).